The sequence spans 362 residues: Spermidine/putrescine import ATP-binding protein PotA (362 aa).

The ABC transporter domain maps to 4–235 (IKLDHITKQY…PVNDFVARFI (232 aa)). 37-44 (GPSGSGKT) is an ATP binding site.

The protein belongs to the ABC transporter superfamily. Spermidine/putrescine importer (TC 3.A.1.11.1) family. As to quaternary structure, the complex is composed of two ATP-binding proteins (PotA), two transmembrane proteins (PotB and PotC) and a solute-binding protein (PotD).

The protein resides in the cell membrane. The catalysed reaction is ATP + H2O + polyamine-[polyamine-binding protein]Side 1 = ADP + phosphate + polyamineSide 2 + [polyamine-binding protein]Side 1.. In terms of biological role, part of the ABC transporter complex PotABCD involved in spermidine/putrescine import. Responsible for energy coupling to the transport system. The sequence is that of Spermidine/putrescine import ATP-binding protein PotA from Lactobacillus delbrueckii subsp. bulgaricus (strain ATCC BAA-365 / Lb-18).